An 86-amino-acid polypeptide reads, in one-letter code: MAQKKGGGSTRNGRDSESKRLGVKVYGGQAINAGGIIVRQRGTRTHAGVNVGMGKDHTLFALVDGHVKFANRGEGKKQFVDVVPAA.

The span at 1-10 (MAQKKGGGST) shows a compositional bias: gly residues. Residues 1 to 21 (MAQKKGGGSTRNGRDSESKRL) are disordered.

The protein belongs to the bacterial ribosomal protein bL27 family.

This Ralstonia pickettii (strain 12J) protein is Large ribosomal subunit protein bL27.